The chain runs to 315 residues: MDNLYTKGELLQVHTKNYDVFEGRFYSMAQDKTKISLYDVKEIPHGDANDGVLHYYDSEIREVVKLQESTEKKVLKISQTKYEEILKISKKYIFINQVDKSFHEAVDDLNQQDFIAVSGDGANMGRKCKMPFLVLSTDHQIYIFDIQVMQYHAFESGLKKILEGDSPKKIAHDCRKLSDCLYHKHNVKLKSVFDTQVGDLIITKNKKVTLPNKVKSLGECLTNYLGLQQNTIDEKLDIVQSTERPLSVKIKDSLARNIAFLHHLSEVINEEMQLPFYRGVECYIENIRSSDDFKAWELCGKLNQIPKEFRNAIDY.

One can recognise a 3'-5' exonuclease domain in the interval 141-228 (IYIFDIQVMQ…ECLTNYLGLQ (88 aa)).

It belongs to the EXD1 family. As to quaternary structure, homodimer. Component of the PET complex, at least composed of EXD1, SIWI, TDRD12 and piRNAs.

It is found in the cytoplasm. Functionally, RNA-binding component of the PET complex, a multiprotein complex required for the processing of piRNAs during spermatogenesis. The piRNA metabolic process mediates the repression of transposable elements during meiosis by forming complexes composed of piRNAs and Piwi proteins and governs the methylation and subsequent repression of transposable elements, preventing their mobilization, which is essential for the germline integrity. The PET complex is required during the secondary piRNAs metabolic process for the PIWIL2 slicing-triggered loading of PIWIL4 piRNAs. In the PET complex, EXD1 probably acts as an RNA adapter. EXD1 is an inactive exonuclease. This chain is piRNA biogenesis protein EXD1, found in Bombyx mori (Silk moth).